Here is a 122-residue protein sequence, read N- to C-terminus: Large ribosomal subunit protein uL14 (122 aa).

Belongs to the universal ribosomal protein uL14 family. Part of the 50S ribosomal subunit. Forms a cluster with proteins L3 and L19. In the 70S ribosome, L14 and L19 interact and together make contacts with the 16S rRNA in bridges B5 and B8.

Functionally, binds to 23S rRNA. Forms part of two intersubunit bridges in the 70S ribosome. The polypeptide is Large ribosomal subunit protein uL14 (Rickettsia bellii (strain OSU 85-389)).